A 413-amino-acid chain; its full sequence is 3-isopropylmalate dehydratase large subunit (413 aa).

[4Fe-4S] cluster is bound by residues cysteine 293, cysteine 353, and cysteine 356.

It belongs to the aconitase/IPM isomerase family. LeuC type 2 subfamily. In terms of assembly, heterodimer of LeuC and LeuD. [4Fe-4S] cluster serves as cofactor.

It carries out the reaction (2R,3S)-3-isopropylmalate = (2S)-2-isopropylmalate. It functions in the pathway amino-acid biosynthesis; L-leucine biosynthesis; L-leucine from 3-methyl-2-oxobutanoate: step 2/4. Its function is as follows. Catalyzes the isomerization between 2-isopropylmalate and 3-isopropylmalate, via the formation of 2-isopropylmaleate. This is 3-isopropylmalate dehydratase large subunit from Picrophilus torridus (strain ATCC 700027 / DSM 9790 / JCM 10055 / NBRC 100828 / KAW 2/3).